A 217-amino-acid chain; its full sequence is Zinc finger CCHC-type and RNA-binding motif-containing protein 1 (217 aa).

The RRM domain maps to 10 to 88 (STVYVSNLPF…RVIKASIAID (79 aa)). The CCHC-type zinc finger occupies 105–122 (SKCYECGESGHLSYACPK). The interval 120 to 217 (CPKNMLGERE…YFSDEEELSD (98 aa)) is disordered. The segment covering 145–163 (PEEEIEEVEVSEEEGEDPA) has biased composition (acidic residues). Ser155, Ser210, and Ser216 each carry phosphoserine.

As to quaternary structure, component of the U11/U12 snRNPs that are part of the U12-type spliceosome. Interacts with ZRSR1. As to expression, expressed at higher level in heart and testis, and at lower level in cerebellum. Weakly expressed at low level in liver.

Its subcellular location is the nucleus. It localises to the nucleoplasm. This chain is Zinc finger CCHC-type and RNA-binding motif-containing protein 1 (Zcrb1), found in Mus musculus (Mouse).